Here is a 284-residue protein sequence, read N- to C-terminus: Cytochrome P450 2C31 (284 aa).

C229 serves as a coordination point for heme.

It belongs to the cytochrome P450 family. Requires heme as cofactor.

The protein localises to the endoplasmic reticulum membrane. It is found in the microsome membrane. The enzyme catalyses an organic molecule + reduced [NADPH--hemoprotein reductase] + O2 = an alcohol + oxidized [NADPH--hemoprotein reductase] + H2O + H(+). Cytochromes P450 are a group of heme-thiolate monooxygenases. In liver microsomes, this enzyme is involved in an NADPH-dependent electron transport pathway. It oxidizes a variety of structurally unrelated compounds, including steroids, fatty acids, and xenobiotics. The chain is Cytochrome P450 2C31 (CYP2C31) from Capra hircus aegagrus (Wild goat).